The following is a 993-amino-acid chain: Replication protein 1a (993 aa).

The segment at 50 to 409 (RNVLSVKDSE…TIVINGMSMQ (360 aa)) is methyltransferase. Residues 72–290 (HLTQQEFAPH…HDWENIKSFL (219 aa)) form the Alphavirus-like MT domain. The segment at 537-565 (LAQPVDEVSDSPEVPSSTPDDTADVCGKE) is disordered. The region spanning 687–838 (CVICNSESLS…KIIPDETSDA (152 aa)) is the (+)RNA virus helicase ATP-binding domain. Residues 712 to 975 (VDGVAGCGKT…LTRHKVTFRY (264 aa)) are ATP-dependent helicase. 714-721 (GVAGCGKT) contacts ATP. The (+)RNA virus helicase C-terminal domain maps to 839-993 (DTTFRSPQDV…DLIAECIARA (155 aa)).

The protein belongs to the bromoviridae replication protein 1a family. In terms of assembly, interacts with RNA-directed RNA polymerase 2a.

Its subcellular location is the host endoplasmic reticulum membrane. Functionally, involved in the virus replication. Contains a helicase domain and a methyltransferase domain. The methyltransferase domain is probably involved in viral RNA capping. Involved in the formation of ER membrane spherular invaginations in which RNA replication complexes form. The chain is Replication protein 1a from Cucumber mosaic virus (strain O) (CMV).